Here is a 369-residue protein sequence, read N- to C-terminus: 2-aminoethylphosphonate--pyruvate transaminase 1 (369 aa).

Lys-191 bears the N6-(pyridoxal phosphate)lysine mark.

This sequence belongs to the class-V pyridoxal-phosphate-dependent aminotransferase family. PhnW subfamily. As to quaternary structure, homodimer. It depends on pyridoxal 5'-phosphate as a cofactor.

It carries out the reaction (2-aminoethyl)phosphonate + pyruvate = phosphonoacetaldehyde + L-alanine. Its function is as follows. Involved in phosphonate degradation. This chain is 2-aminoethylphosphonate--pyruvate transaminase 1, found in Burkholderia lata (strain ATCC 17760 / DSM 23089 / LMG 22485 / NCIMB 9086 / R18194 / 383).